The primary structure comprises 317 residues: Transaldolase (317 aa).

Lys132 acts as the Schiff-base intermediate with substrate in catalysis.

The protein belongs to the transaldolase family. Type 1 subfamily. As to quaternary structure, homodimer.

The protein localises to the cytoplasm. It carries out the reaction D-sedoheptulose 7-phosphate + D-glyceraldehyde 3-phosphate = D-erythrose 4-phosphate + beta-D-fructose 6-phosphate. It functions in the pathway carbohydrate degradation; pentose phosphate pathway; D-glyceraldehyde 3-phosphate and beta-D-fructose 6-phosphate from D-ribose 5-phosphate and D-xylulose 5-phosphate (non-oxidative stage): step 2/3. Functionally, transaldolase is important for the balance of metabolites in the pentose-phosphate pathway. The protein is Transaldolase of Histophilus somni (strain 2336) (Haemophilus somnus).